A 439-amino-acid polypeptide reads, in one-letter code: Arginine biosynthesis bifunctional protein ArgJ, mitochondrial (439 aa).

Residues T175, K201, T212, E301, N434, and S439 each coordinate substrate. The active-site Nucleophile is the T212.

Belongs to the ArgJ family. Heterodimer of an alpha and a beta chain. Post-translationally, the alpha and beta chains are autoproteolytically processed from a single precursor protein within the mitochondrion.

The protein resides in the mitochondrion matrix. The enzyme catalyses N(2)-acetyl-L-ornithine + L-glutamate = N-acetyl-L-glutamate + L-ornithine. It catalyses the reaction L-glutamate + acetyl-CoA = N-acetyl-L-glutamate + CoA + H(+). Its pathway is amino-acid biosynthesis; L-arginine biosynthesis; L-ornithine and N-acetyl-L-glutamate from L-glutamate and N(2)-acetyl-L-ornithine (cyclic): step 1/1. It functions in the pathway amino-acid biosynthesis; L-arginine biosynthesis; N(2)-acetyl-L-ornithine from L-glutamate: step 1/4. Its function is as follows. Catalyzes two activities which are involved in the cyclic version of arginine biosynthesis: the synthesis of acetylglutamate from glutamate and acetyl-CoA, and of ornithine by transacetylation between acetylornithine and glutamate. The polypeptide is Arginine biosynthesis bifunctional protein ArgJ, mitochondrial (Candida albicans (strain WO-1) (Yeast)).